We begin with the raw amino-acid sequence, 248 residues long: 14-3-3 protein homolog 2 (248 aa).

This sequence belongs to the 14-3-3 family.

The polypeptide is 14-3-3 protein homolog 2 (Echinococcus granulosus (Hydatid tapeworm)).